Reading from the N-terminus, the 270-residue chain is Putative pyruvate, phosphate dikinase regulatory protein (270 aa).

148-155 (GISRTSKT) provides a ligand contact to ADP.

It belongs to the pyruvate, phosphate/water dikinase regulatory protein family. PDRP subfamily.

The enzyme catalyses N(tele)-phospho-L-histidyl/L-threonyl-[pyruvate, phosphate dikinase] + ADP = N(tele)-phospho-L-histidyl/O-phospho-L-threonyl-[pyruvate, phosphate dikinase] + AMP + H(+). It catalyses the reaction N(tele)-phospho-L-histidyl/O-phospho-L-threonyl-[pyruvate, phosphate dikinase] + phosphate + H(+) = N(tele)-phospho-L-histidyl/L-threonyl-[pyruvate, phosphate dikinase] + diphosphate. Bifunctional serine/threonine kinase and phosphorylase involved in the regulation of the pyruvate, phosphate dikinase (PPDK) by catalyzing its phosphorylation/dephosphorylation. The chain is Putative pyruvate, phosphate dikinase regulatory protein from Bacillus cereus (strain 03BB102).